The primary structure comprises 431 residues: MNILIKNADIITCNASDDVLQGAFLGIKDGYIDFIDTKEDALKDFKADRIIDAKGKLVMPGLVNAHTHSGMTILRNFANDLALEDWLFGNVLPVEEKLTPEDIYWGTLLGIAEMIKSGTTTFADMYLHMEEVARAVSETGIRANLCRSPLKDSDKSVEDAVRCFEYFKKWDNSFNGRIKVYIEVHSVYLFDEPSLRMSAEVAKEINTGIHIHVQETLKECEDSNKKYGMSPAEICCKTGIFDVPVIAAHCVHLSDGDMGIIRDKGVNVIHNPTSNLKLGSGIAKVDDMLKNGINVALGTDGAASNNNLNMFEEMHLAALIHKGVHMDPTLIGASCALKMATVNGAKALGFGGEIGEISKGMKADLILIDMDKTHLCPVNDPVSAVVYSAQSSDVDTVIIDGNIVMENRELKTIDEEKVKFNVKEIAKRVLR.

Residues histidine 66 and histidine 68 each contribute to the Zn(2+) site. Residues glutamate 95, arginine 147, and histidine 185 each coordinate substrate. Position 212 (histidine 212) interacts with Zn(2+). The substrate site is built by glutamate 215 and aspartate 300. Aspartate 300 is a binding site for Zn(2+).

It belongs to the metallo-dependent hydrolases superfamily. MTA/SAH deaminase family. Requires Zn(2+) as cofactor.

It catalyses the reaction S-adenosyl-L-homocysteine + H2O + H(+) = S-inosyl-L-homocysteine + NH4(+). The enzyme catalyses S-methyl-5'-thioadenosine + H2O + H(+) = S-methyl-5'-thioinosine + NH4(+). Functionally, catalyzes the deamination of 5-methylthioadenosine and S-adenosyl-L-homocysteine into 5-methylthioinosine and S-inosyl-L-homocysteine, respectively. Is also able to deaminate adenosine. The sequence is that of 5-methylthioadenosine/S-adenosylhomocysteine deaminase from Acetivibrio thermocellus (strain ATCC 27405 / DSM 1237 / JCM 9322 / NBRC 103400 / NCIMB 10682 / NRRL B-4536 / VPI 7372) (Clostridium thermocellum).